Consider the following 632-residue polypeptide: tRNA endonuclease VMS1 (632 aa).

Residues 72–96 form a C2H2-type zinc finger; the sequence is MRCSVCQMSFDSRNEQKAHYQTDYH. The segment at 123–155 is disordered; that stretch reads HGIKSEDENSGGEQTSSDHEESEEASDRDPDLQ. The 161-residue stretch at 232–392 folds into the VLRF1 domain; it reads PMAISALFMV…KKAWCELSYL (161 aa). Gln295 is an active-site residue. ANK repeat units lie at residues 470–500 and 504–530; these read LTPT…DPTI and LGRT…NLGE. Coiled-coil stretches lie at residues 544 to 582 and 608 to 632; these read LSRE…QRFA and TDEQ…KKKY. Positions 578–589 are enriched in basic and acidic residues; sequence KQRFAKDAERGP. Residues 578 to 632 are disordered; the sequence is KQRFAKDAERGPGKKLTNIPSIQQQNLNSLTDEQRRRLMREQRARAAEERMKKKY. Positions 595–608 are enriched in polar residues; the sequence is NIPSIQQQNLNSLT. Basic and acidic residues predominate over residues 609-632; the sequence is DEQRRRLMREQRARAAEERMKKKY.

The protein belongs to the ANKZF1/VMS1 family. In terms of assembly, associates with 60S ribosomal subunit. Interacts with CDC48. Interacts with NPL4.

It localises to the cytoplasm. The protein localises to the mitochondrion. Its subcellular location is the endoplasmic reticulum membrane. Functionally, endonuclease that cleaves polypeptidyl-tRNAs downstream of the ribosome-associated quality control (RQC) pathway to release incompletely synthesized polypeptides for degradation. The RQC pathway disassembles aberrantly stalled translation complexes to recycle or degrade the constituent parts. VMS1 acts downstream disassembly of stalled ribosomes and specifically cleaves off the terminal 3'-CCA nucleotides universal to all tRNAs from polypeptidyl-tRNAs, releasing (1) ubiquitinated polypeptides from 60S ribosomal subunit for degradation by the ERAD pathway and (2) cleaved tRNAs for recycling. Component of an evolutionarily conserved system for ubiquitin-mediated mitochondria-associated protein degradation (MAD), which is necessary to maintain mitochondrial, cellular, and organismal viability. The protein is tRNA endonuclease VMS1 of Saccharomyces cerevisiae (strain ATCC 204508 / S288c) (Baker's yeast).